Consider the following 140-residue polypeptide: Transcription antitermination protein NusB (140 aa).

This sequence belongs to the NusB family.

Involved in transcription antitermination. Required for transcription of ribosomal RNA (rRNA) genes. Binds specifically to the boxA antiterminator sequence of the ribosomal RNA (rrn) operons. This is Transcription antitermination protein NusB from Pseudoalteromonas atlantica (strain T6c / ATCC BAA-1087).